Reading from the N-terminus, the 169-residue chain is Vimentin-type intermediate filament-associated coiled-coil protein (169 aa).

A coiled-coil region spans residues 7–89 (LQIREANAHL…VHSLQATVHQ (83 aa)). Over residues 126 to 135 (RLGPLPASDP) the composition is skewed to low complexity. The segment at 126–169 (RLGPLPASDPGHPPPGGPGPPLDNSTGEEADRDHLQPAVFGTTV) is disordered. Residues 136–146 (GHPPPGGPGPP) are compositionally biased toward pro residues.

Its subcellular location is the cytoplasm. In Homo sapiens (Human), this protein is Vimentin-type intermediate filament-associated coiled-coil protein (VMAC).